The following is a 187-amino-acid chain: uncharacterized protein (187 aa).

An N-terminal signal peptide occupies residues 1–28; that stretch reads MRLHRTNNSRRCTILLILALKIFDFVDT. N-linked (GlcNAc...) asparagine glycosylation is found at Asn-58, Asn-70, Asn-156, and Asn-168.

The protein resides in the secreted. This is an uncharacterized protein from Caenorhabditis elegans.